Here is a 511-residue protein sequence, read N- to C-terminus: Cobyric acid synthase (511 aa).

The GATase cobBQ-type domain maps to 251 to 443; sequence LLDIAIICLP…IHGIFDNDVF (193 aa). C332 acts as the Nucleophile in catalysis. Residue H435 is part of the active site.

It belongs to the CobB/CobQ family. CobQ subfamily.

Its pathway is cofactor biosynthesis; adenosylcobalamin biosynthesis. Functionally, catalyzes amidations at positions B, D, E, and G on adenosylcobyrinic A,C-diamide. NH(2) groups are provided by glutamine, and one molecule of ATP is hydrogenolyzed for each amidation. This chain is Cobyric acid synthase, found in Listeria monocytogenes serotype 4b (strain F2365).